We begin with the raw amino-acid sequence, 722 residues long: Polyribonucleotide nucleotidyltransferase (722 aa).

Residues Asp-495 and Asp-501 each contribute to the Mg(2+) site. Residues 562–621 (PRLLSFRIDPELIGTVIGPGGRTIKGITERTNTKIDIEDGGIVTIASHDGVAAEEAQKII) enclose the KH domain. Positions 631–699 (GEIFTGSITR…NRGRINLTLR (69 aa)) constitute an S1 motif domain. Residues 701-711 (VSQNNNDMNYP) are compositionally biased toward polar residues. The tract at residues 701–722 (VSQNNNDMNYPQPTPTPVAPLN) is disordered. The segment covering 712–722 (QPTPTPVAPLN) has biased composition (pro residues).

The protein belongs to the polyribonucleotide nucleotidyltransferase family. The cofactor is Mg(2+).

The protein resides in the cytoplasm. The enzyme catalyses RNA(n+1) + phosphate = RNA(n) + a ribonucleoside 5'-diphosphate. Functionally, involved in mRNA degradation. Catalyzes the phosphorolysis of single-stranded polyribonucleotides processively in the 3'- to 5'-direction. In Prochlorococcus marinus (strain MIT 9211), this protein is Polyribonucleotide nucleotidyltransferase.